A 462-amino-acid chain; its full sequence is tRNA(Ile)-lysidine synthase (462 aa).

31–36 contributes to the ATP binding site; the sequence is SGGRDS.

Belongs to the tRNA(Ile)-lysidine synthase family.

It is found in the cytoplasm. The catalysed reaction is cytidine(34) in tRNA(Ile2) + L-lysine + ATP = lysidine(34) in tRNA(Ile2) + AMP + diphosphate + H(+). Functionally, ligates lysine onto the cytidine present at position 34 of the AUA codon-specific tRNA(Ile) that contains the anticodon CAU, in an ATP-dependent manner. Cytidine is converted to lysidine, thus changing the amino acid specificity of the tRNA from methionine to isoleucine. The sequence is that of tRNA(Ile)-lysidine synthase from Ralstonia nicotianae (strain ATCC BAA-1114 / GMI1000) (Ralstonia solanacearum).